A 336-amino-acid polypeptide reads, in one-letter code: MPFKSLDELRAACLDLPAGSDTAAKAVASRQDTLTKPQGSLGRLETIAAWLARWQGRDMPKLDRVKVFVFAGNHGVTAQGVSAYPSEVTVQMVANFAGGGAAINQLARIAGAELDVIPLDLDHPTGDFTQVPAMDEKAFLAAVSAGYDAVTKDLDLVCFGEMGIGNTTPAAAISAALFGGGAEKWTGRGTGVDDAGLKRKVVAIEAGLKRHAAALADPLGVAAALGGRELAAIFGATLAARHLGIPVLLDGFVCTAAAAPLARLHPTGLSHTIAAHVSAESGHRRLLEALGLPPLLDLGMRLGEGSGACLAVNIVRSALECHARMASFAEAGVSEK.

Residue Glu304 is the Proton acceptor of the active site.

This sequence belongs to the CobT family.

The catalysed reaction is 5,6-dimethylbenzimidazole + nicotinate beta-D-ribonucleotide = alpha-ribazole 5'-phosphate + nicotinate + H(+). The protein operates within nucleoside biosynthesis; alpha-ribazole biosynthesis; alpha-ribazole from 5,6-dimethylbenzimidazole: step 1/2. Its function is as follows. Catalyzes the synthesis of alpha-ribazole-5'-phosphate from nicotinate mononucleotide (NAMN) and 5,6-dimethylbenzimidazole (DMB). This chain is Nicotinate-nucleotide--dimethylbenzimidazole phosphoribosyltransferase, found in Mesorhizobium japonicum (strain LMG 29417 / CECT 9101 / MAFF 303099) (Mesorhizobium loti (strain MAFF 303099)).